A 222-amino-acid chain; its full sequence is Pyridoxine/pyridoxamine 5'-phosphate oxidase (222 aa).

Residues Arg16–Tyr19 and Lys75 contribute to the substrate site. FMN is bound by residues Arg70–Lys75, Phe85–Thr86, Lys92, and Gln114. 3 residues coordinate substrate: Tyr132, Arg136, and Ser140. Residues Gln149–Ser150 and Trp195 each bind FMN. Arg201–His203 serves as a coordination point for substrate. Arg205 serves as a coordination point for FMN.

This sequence belongs to the pyridoxamine 5'-phosphate oxidase family. In terms of assembly, homodimer. FMN serves as cofactor.

It catalyses the reaction pyridoxamine 5'-phosphate + O2 + H2O = pyridoxal 5'-phosphate + H2O2 + NH4(+). The enzyme catalyses pyridoxine 5'-phosphate + O2 = pyridoxal 5'-phosphate + H2O2. It participates in cofactor metabolism; pyridoxal 5'-phosphate salvage; pyridoxal 5'-phosphate from pyridoxamine 5'-phosphate: step 1/1. The protein operates within cofactor metabolism; pyridoxal 5'-phosphate salvage; pyridoxal 5'-phosphate from pyridoxine 5'-phosphate: step 1/1. Its function is as follows. Catalyzes the oxidation of either pyridoxine 5'-phosphate (PNP) or pyridoxamine 5'-phosphate (PMP) into pyridoxal 5'-phosphate (PLP). The protein is Pyridoxine/pyridoxamine 5'-phosphate oxidase of Saccharopolyspora erythraea (strain ATCC 11635 / DSM 40517 / JCM 4748 / NBRC 13426 / NCIMB 8594 / NRRL 2338).